The primary structure comprises 1030 residues: Calcium-transporting ATPase 4, plasma membrane-type (1030 aa).

Residues 1-157 (MSNLLRDFEV…NRYTEKPARS (157 aa)) lie on the Cytoplasmic side of the membrane. The interval 19-30 (ARQRWRSSVSIV) is interaction with calmodulin. Ser28 carries the post-translational modification Phosphoserine. The helical transmembrane segment at 158 to 178 (FLMFVWEALHDITLIILMVCA) threads the bilayer. Over 179–196 (VVSIGVGVATEGFPRGMY) the chain is Lumenal. Residues 197 to 217 (DGTGILLSILLVVMVTAISDY) traverse the membrane as a helical segment. The Cytoplasmic portion of the chain corresponds to 218-345 (KQSLQFRDLD…EDETPLQVKL (128 aa)). A helical membrane pass occupies residues 346 to 365 (NGVATIIGKIGLSFAVLTFV). Over 366 to 395 (VLCIRFVLDKATSGSFTNWSSEDALTLLDY) the chain is Lumenal. Residues 396 to 413 (FAISVTIIVVAVPEGLPL) traverse the membrane as a helical segment. The Cytoplasmic portion of the chain corresponds to 414 to 804 (AVTLSLAFAM…RWGRAVYINI (391 aa)). Asp451 functions as the 4-aspartylphosphate intermediate in the catalytic mechanism. Residues Asp749 and Asp753 each coordinate Mg(2+). Residues 805 to 823 (QKFVQFQLTVNVVALIINF) traverse the membrane as a helical segment. Residues 824 to 834 (VSACITGSAPL) lie on the Lumenal side of the membrane. Residues 835-855 (TAVQLLWVNMIMDTLGALALA) traverse the membrane as a helical segment. The Cytoplasmic segment spans residues 856 to 875 (TEPPNEGLMKRAPIARTASF). The chain crosses the membrane as a helical span at residues 876–898 (ITKTMWRNIAGQSVYQLIVLGIL). Residues 899 to 910 (NFAGKSLLKLDG) are Lumenal-facing. A helical membrane pass occupies residues 911 to 932 (PDSTAVLNTVIFNSFVFCQVFN). Residues 933–950 (EINSREIEKINVFKGMFN) lie on the Cytoplasmic side of the membrane. The helical transmembrane segment at 951-972 (SWVFTWVMTVTVVFQVIIVEFL) threads the bilayer. At 973 to 982 (GAFASTVPLS) the chain is on the lumenal side. Residues 983–1004 (WQHWLLSILIGSLNMIVAVILK) traverse the membrane as a helical segment. Over 1005 to 1030 (CVPVESRHHHDGYDLLPSGPSSSNSA) the chain is Cytoplasmic.

It belongs to the cation transport ATPase (P-type) (TC 3.A.3) family. Type IIB subfamily.

Its subcellular location is the vacuole membrane. The catalysed reaction is Ca(2+)(in) + ATP + H2O = Ca(2+)(out) + ADP + phosphate + H(+). Activated by calmodulin. In terms of biological role, this magnesium-dependent enzyme catalyzes the hydrolysis of ATP coupled with the translocation of calcium from the cytosol into small vacuoles. This Arabidopsis thaliana (Mouse-ear cress) protein is Calcium-transporting ATPase 4, plasma membrane-type (ACA4).